The chain runs to 275 residues: Cytochrome c oxidase subunit 3 (275 aa).

The next 7 membrane-spanning stretches (helical) occupy residues 22–42 (PWPL…VMYF), 52–72 (SGAL…ALWF), 96–116 (GVAL…WAFF), 132–152 (PVGI…ILLL), 173–193 (AILG…CQGI), 211–231 (FFFS…FIAV), and 253–273 (ILYW…VYWW).

The protein belongs to the cytochrome c oxidase subunit 3 family. Component of the cytochrome c oxidase (complex IV, CIV), a multisubunit enzyme composed of a catalytic core of 3 subunits and several supernumerary subunits. The complex exists as a monomer or a dimer and forms supercomplexes (SCs) in the inner mitochondrial membrane with ubiquinol-cytochrome c oxidoreductase (cytochrome b-c1 complex, complex III, CIII).

The protein resides in the mitochondrion inner membrane. It catalyses the reaction 4 Fe(II)-[cytochrome c] + O2 + 8 H(+)(in) = 4 Fe(III)-[cytochrome c] + 2 H2O + 4 H(+)(out). In terms of biological role, component of the cytochrome c oxidase, the last enzyme in the mitochondrial electron transport chain which drives oxidative phosphorylation. The respiratory chain contains 3 multisubunit complexes succinate dehydrogenase (complex II, CII), ubiquinol-cytochrome c oxidoreductase (cytochrome b-c1 complex, complex III, CIII) and cytochrome c oxidase (complex IV, CIV), that cooperate to transfer electrons derived from NADH and succinate to molecular oxygen, creating an electrochemical gradient over the inner membrane that drives transmembrane transport and the ATP synthase. Cytochrome c oxidase is the component of the respiratory chain that catalyzes the reduction of oxygen to water. Electrons originating from reduced cytochrome c in the intermembrane space (IMS) are transferred via the dinuclear copper A center (CU(A)) of subunit 2 and heme A of subunit 1 to the active site in subunit 1, a binuclear center (BNC) formed by heme A3 and copper B (CU(B)). The BNC reduces molecular oxygen to 2 water molecules using 4 electrons from cytochrome c in the IMS and 4 protons from the mitochondrial matrix. This chain is Cytochrome c oxidase subunit 3 (COX3), found in Mycosarcoma maydis (Corn smut fungus).